Consider the following 193-residue polypeptide: Peptidyl-tRNA hydrolase (193 aa).

Residue Tyr17 participates in tRNA binding. Catalysis depends on His22, which acts as the Proton acceptor. 3 residues coordinate tRNA: Phe68, Asn70, and Asn116.

This sequence belongs to the PTH family. In terms of assembly, monomer.

Its subcellular location is the cytoplasm. The enzyme catalyses an N-acyl-L-alpha-aminoacyl-tRNA + H2O = an N-acyl-L-amino acid + a tRNA + H(+). In terms of biological role, hydrolyzes ribosome-free peptidyl-tRNAs (with 1 or more amino acids incorporated), which drop off the ribosome during protein synthesis, or as a result of ribosome stalling. Catalyzes the release of premature peptidyl moieties from peptidyl-tRNA molecules trapped in stalled 50S ribosomal subunits, and thus maintains levels of free tRNAs and 50S ribosomes. In Acinetobacter baylyi (strain ATCC 33305 / BD413 / ADP1), this protein is Peptidyl-tRNA hydrolase.